The sequence spans 189 residues: UPF0149 protein VF_2102 (189 aa).

This sequence belongs to the UPF0149 family.

This Aliivibrio fischeri (strain ATCC 700601 / ES114) (Vibrio fischeri) protein is UPF0149 protein VF_2102.